The following is a 376-amino-acid chain: NADPH oxidase organizer 1 (376 aa).

In terms of domain architecture, PX spans 1-131 (MAGPRYPVSV…GFFAPQPLDL (131 aa)). SH3 domains follow at residues 163 to 225 (LEAQ…EAAP) and 237 to 296 (SSGP…PEGL). The tract at residues 302–376 (GTGFRGGDDP…DSVPHPTTEQ (75 aa)) is disordered. Residues 326–335 (APPPTVPTRP) are compositionally biased toward pro residues. The interval 328-337 (PPTVPTRPSP) is proline-rich region; mediates mutually exclusive interactions with itself and NOXA1.

As to quaternary structure, interacts with NOX1, NOXA1, CYBA/p22phox and NCF2/p67phox. Interacts with SH3PXD2A and SH3PXD2B. Expressed in testis, small and large intestines, liver, kidney and pancreas. Isoform 3 is mainly expressed in colon. Isoform 1 is preferentially expressed in testis.

The protein localises to the cell membrane. Constitutively potentiates the superoxide-generating activity of NOX1 and NOX3 and is required for the biogenesis of otoconia/otolith, which are crystalline structures of the inner ear involved in the perception of gravity. Isoform 3 is more potent than isoform 1 in activating NOX3. Together with NOXA1, may also substitute to NCF1/p47phox and NCF2/p67phox in supporting the phagocyte NOX2/gp91phox superoxide-generating activity. The sequence is that of NADPH oxidase organizer 1 (NOXO1) from Homo sapiens (Human).